The sequence spans 221 residues: Catechol O-methyltransferase (221 aa).

Positions 41, 65, 67, 71, 89, 94, 118, and 139 each coordinate S-adenosyl-L-methionine. Asp-139, Asp-165, and Asn-166 together coordinate Mg(2+).

This sequence belongs to the class I-like SAM-binding methyltransferase superfamily. Cation-dependent O-methyltransferase family. Homodimer. Mg(2+) is required as a cofactor.

The enzyme catalyses a catechol + S-adenosyl-L-methionine = a guaiacol + S-adenosyl-L-homocysteine + H(+). Its activity is regulated as follows. The metal ion affects the meta and para-regiospecificity of the enzyme as well as the enzyme activity and thermal stability. Functionally, catechol O-methyltransferase that can use various catechol-like compounds. Can produce vanillic acid (meta-form) and iso-vanillic acid (para-form) from protocatechuic acid (PCA). Does not have a regiospecificity, and produces the meta- and para-forms of the products in equal proportion. The sequence is that of Catechol O-methyltransferase from Niastella koreensis (strain DSM 17620 / KACC 11465 / NBRC 106392 / GR20-10).